Here is a 279-residue protein sequence, read N- to C-terminus: MMSFSQPDAFSPSQFTSSQNAAADSTTPSKSRGASSTMPLTVKQISEAQQSGITGEKGAPFVVDGVETANVRLVGLVSGKTERNTDVSFTIDDGTGRLDFIRWVNDGADSAETAAVQNGMYVSVIGSLKGLQERKRATAFAIRPVTDYNEVTLHFIQCVRMHLENTKSQIGSPAKTYSAMGSSSSNGFSEMTTPTSVKSNPAPVLSVTNGSKTDLNTEVLNVFREPANVESEHGVHIDEIVKRFRLPEAKIKVAIDYLADIGHIYSTIDESHYKSAFNE.

The segment at 1 to 39 is disordered; that stretch reads MMSFSQPDAFSPSQFTSSQNAAADSTTPSKSRGASSTMP. The OB DNA-binding region spans 71-145; sequence VRLVGLVSGK…RATAFAIRPV (75 aa). Residues 181-210 form a disordered region; the sequence is GSSSSNGFSEMTTPTSVKSNPAPVLSVTNG. Polar residues predominate over residues 190-199; sequence EMTTPTSVKS.

It belongs to the replication factor A protein 2 family. In terms of assembly, heterotrimer of RPA1, RPA2 and RPA3 (canonical replication protein A complex). Interacts with RPA1A, RPA1B and RPA3. In terms of processing, phosphorylated in a cell-cycle-dependent manner (from the S phase until mitosis). In response to DNA damage, recruited to DNA-repair nuclear foci, as a hypophosphorylated form. As to expression, expressed in root tips, roots, shoot apical meristem (SAM), young leaves, flag leaves and ears, and at lower levels in mature leaves.

Its subcellular location is the nucleus. Functionally, component of the replication protein A complex (RPA) required for DNA recombination, repair and replication. The activity of RPA is mediated by single-stranded DNA binding and protein interactions. This chain is Replication protein A 32 kDa subunit A (RPA2A), found in Oryza sativa subsp. japonica (Rice).